Here is a 207-residue protein sequence, read N- to C-terminus: Metalloproteinase inhibitor 1 (207 aa).

Positions 1-23 (MAPLAALASSMLLLLWLVAPSRA) are cleaved as a signal peptide. C24 is a Zn(2+) binding site. Residues 24-27 (CTCV) form an involved in metalloproteinase-binding region. Disulfide bonds link C24–C93, C26–C122, C36–C147, C150–C197, C155–C160, and C168–C189. The NTR domain maps to 24-147 (CTCVPPHPQT…GFTKTYAAGC (124 aa)). N53 carries N-linked (GlcNAc...) asparagine glycosylation. The tract at residues 90-91 (ES) is involved in metalloproteinase-binding. N101 carries an N-linked (GlcNAc...) asparagine glycan. S178 bears the Phosphoserine mark.

The protein belongs to the protease inhibitor I35 (TIMP) family. Interacts with MMP1, MMP3, MMP10 and MMP13, but has only very low affinity for MMP14. Interacts with CD63; identified in a complex with CD63 and ITGB1. In terms of processing, the activity of TIMP1 is dependent on the presence of disulfide bonds. N-glycosylated.

The protein localises to the secreted. Its function is as follows. Metalloproteinase inhibitor that functions by forming one to one complexes with target metalloproteinases, such as collagenases, and irreversibly inactivates them by binding to their catalytic zinc cofactor. Acts on MMP1, MMP2, MMP3, MMP7, MMP8, MMP9, MMP10, MMP11, MMP12, MMP13 and MMP16. Does not act on MMP14. Also functions as a growth factor that regulates cell differentiation, migration and cell death and activates cellular signaling cascades via CD63 and ITGB1. Plays a role in integrin signaling. The chain is Metalloproteinase inhibitor 1 (TIMP1) from Oryctolagus cuniculus (Rabbit).